Consider the following 88-residue polypeptide: MENKKSHYFYVLLCQDGSFYGGYTTEPERRLTEHNSGTGAKYTRLAKRRPVIMIHTEKFETRSEATKAEAAFKKLTRKQKEQYLKTFH.

The 78-residue stretch at 5-82 (KSHYFYVLLC…KKLTRKQKEQ (78 aa)) folds into the GIY-YIG domain.

Belongs to the UPF0213 family.

This Enterococcus faecalis (strain ATCC 700802 / V583) protein is UPF0213 protein EF_2693.